Here is a 379-residue protein sequence, read N- to C-terminus: Cytochrome b (379 aa).

4 consecutive transmembrane segments (helical) span residues 33-53 (FGSL…FLAM), 77-98 (WLIR…FIHV), 113-133 (WNIG…GYVL), and 178-198 (FFAF…VHLL). Heme b contacts are provided by H83 and H97. The heme b site is built by H182 and H196. H201 is an a ubiquinone binding site. A run of 4 helical transmembrane segments spans residues 226–246 (IKDL…ALFF), 288–308 (LGGV…PLLN), 320–340 (ITQT…WIGG), and 347–367 (FTTI…IIMP).

The protein belongs to the cytochrome b family. The cytochrome bc1 complex contains 11 subunits: 3 respiratory subunits (MT-CYB, CYC1 and UQCRFS1), 2 core proteins (UQCRC1 and UQCRC2) and 6 low-molecular weight proteins (UQCRH/QCR6, UQCRB/QCR7, UQCRQ/QCR8, UQCR10/QCR9, UQCR11/QCR10 and a cleavage product of UQCRFS1). This cytochrome bc1 complex then forms a dimer. The cofactor is heme b.

It localises to the mitochondrion inner membrane. Functionally, component of the ubiquinol-cytochrome c reductase complex (complex III or cytochrome b-c1 complex) that is part of the mitochondrial respiratory chain. The b-c1 complex mediates electron transfer from ubiquinol to cytochrome c. Contributes to the generation of a proton gradient across the mitochondrial membrane that is then used for ATP synthesis. In Deltamys kempi (Kemp's grass mouse), this protein is Cytochrome b (MT-CYB).